A 452-amino-acid chain; its full sequence is Zinc finger protein 277 (452 aa).

The C2H2-type 1 zinc finger occupies 200–224 (LMCLYCEKIFRDRPTLKEHMRKKGH). The disordered stretch occupies residues 248–271 (APTPRKQHLQKRRRETASVSTVAD). A compositionally biased stretch (basic residues) spans 252-261 (RKQHLQKRRR). A C2H2-type 2 zinc finger spans residues 361–385 (LRCVTCDLQFDEEELLVEHMAQESH).

It belongs to the ZNF277 family. As to quaternary structure, interacts with components of the origin recognition complex (ORC) complex, Orc2 and Orc3, components of the SAGA transcription coactivator-HAT complex, Gcn5 and e(y)2, components of the mRNP biogenesis THO complex, thoc5 and e(y)2, and a component of the TFIID complex, TBP. Also interacts with polybromo, a component of the chromatin remodeling SWI/SNF complex.

It localises to the nucleus. The protein resides in the cytoplasm. Functionally, DNA binding protein which is involved in the positive regulation of both basal and inducible transcription. Mainly localizes to active promoter sites and interacts with components of various transcription and replication regulatory complexes, such as the ORC, SAGA, THO, TFIID and SWI/SNF complexes. It may therefore regulate transcription by promoting the association of these complexes to their binding sites. This chain is Zinc finger protein 277, found in Drosophila melanogaster (Fruit fly).